A 240-amino-acid chain; its full sequence is Guanine nucleotide exchange factor sopE2 (240 aa).

Residues 78 to 240 (LTSKTVKDFM…IANKYLQNAS (163 aa)) form a GEF catalytic domain region.

It belongs to the GEF (guanine exchange factor) SopE family.

It is found in the secreted. In terms of biological role, activator for CDC42 by directly engaging this Rho GTPase and acting as potent guanine nucleotide exchange factor (GEF). This activation results in actin cytoskeleton rearrangements and stimulates membrane ruffling, promoting bacterial entry into non-phagocytic cells. Also activates NF-kB, p38 and ERK kinases, which are known to be involved in the induction of IL-8 expression. Chaperone InvB is required for secretion, translocation and stabilization of intracellular levels of sopE2. This Salmonella typhimurium (strain LT2 / SGSC1412 / ATCC 700720) protein is Guanine nucleotide exchange factor sopE2 (sopE2).